Reading from the N-terminus, the 1668-residue chain is DNA polymerase (1668 aa).

DOD-type homing endonuclease domains are found at residues 739–872 and 1191–1330; these read LLGY…SLGV and LIGL…LVGV.

This sequence belongs to the DNA polymerase type-B family. In terms of processing, this protein undergoes a protein self splicing that involves a post-translational excision of the intervening region (intein) followed by peptide ligation.

The catalysed reaction is DNA(n) + a 2'-deoxyribonucleoside 5'-triphosphate = DNA(n+1) + diphosphate. In addition to polymerase activity, this DNA polymerase exhibits 3' to 5' exonuclease activity. In terms of biological role, PI-ThyI and PI-ThyII are endonucleases. PI-ThyI cleaves the inteinless sequence of the Thy DNA pol gene. It requires a 21-bp minimal recognition sequence. This Thermococcus hydrothermalis protein is DNA polymerase (pol).